The primary structure comprises 179 residues: Large ribosomal subunit protein uL5 (179 aa).

It belongs to the universal ribosomal protein uL5 family. As to quaternary structure, part of the 50S ribosomal subunit; part of the 5S rRNA/L5/L18/L25 subcomplex. Contacts the 5S rRNA and the P site tRNA. Forms a bridge to the 30S subunit in the 70S ribosome.

This is one of the proteins that bind and probably mediate the attachment of the 5S RNA into the large ribosomal subunit, where it forms part of the central protuberance. In the 70S ribosome it contacts protein S13 of the 30S subunit (bridge B1b), connecting the 2 subunits; this bridge is implicated in subunit movement. Contacts the P site tRNA; the 5S rRNA and some of its associated proteins might help stabilize positioning of ribosome-bound tRNAs. The polypeptide is Large ribosomal subunit protein uL5 (Anoxybacillus flavithermus (strain DSM 21510 / WK1)).